The chain runs to 825 residues: Endoglucanase C (825 aa).

A signal peptide spans 1-28 (MRNKLRRLLAIMMAVLLITSLFAPMVSA). E219 serves as the catalytic Proton donor. The active-site Nucleophile is the E335. Residues 607 to 621 (DRESVPEPVEHDTKG) show a composition bias toward basic and acidic residues. A disordered region spans residues 607–635 (DRESVPEPVEHDTKGDSALPSDFEDGTRQ).

It belongs to the glycosyl hydrolase 5 (cellulase A) family.

The catalysed reaction is Endohydrolysis of (1-&gt;4)-beta-D-glucosidic linkages in cellulose, lichenin and cereal beta-D-glucans.. The chain is Endoglucanase C (celC) from Evansella cellulosilytica (strain ATCC 21833 / DSM 2522 / FERM P-1141 / JCM 9156 / N-4) (Bacillus cellulosilyticus).